The chain runs to 176 residues: Protein FAM89A (176 aa).

The interval 140–165 (DFQEQGSLRDGQGRGSPGDPSLPLTH) is disordered.

It belongs to the FAM89 family.

The chain is Protein FAM89A (Fam89a) from Rattus norvegicus (Rat).